Reading from the N-terminus, the 215-residue chain is Cytochrome b6 (215 aa).

Residues 32–52 (IFYCLGGIVFVSFLIQVATGF) form a helical membrane-spanning segment. Cysteine 35 lines the heme c pocket. Residues histidine 86 and histidine 100 each contribute to the heme b site. Transmembrane regions (helical) follow at residues 90–110 (VSMMVLMMILHVFRVYLTGGF), 116–136 (LTWVTGVILGVLTVSFGVTGY), and 186–206 (LHTFVLPLLTAVFMLMHFLMI). Positions 187 and 202 each coordinate heme b.

The protein belongs to the cytochrome b family. PetB subfamily. The 4 large subunits of the cytochrome b6-f complex are cytochrome b6, subunit IV (17 kDa polypeptide, PetD), cytochrome f and the Rieske protein, while the 4 small subunits are PetG, PetL, PetM and PetN. The complex functions as a dimer. Heme b serves as cofactor. Requires heme c as cofactor.

The protein resides in the plastid. It localises to the chloroplast thylakoid membrane. Functionally, component of the cytochrome b6-f complex, which mediates electron transfer between photosystem II (PSII) and photosystem I (PSI), cyclic electron flow around PSI, and state transitions. This is Cytochrome b6 from Pyropia yezoensis (Susabi-nori).